A 279-amino-acid polypeptide reads, in one-letter code: Membrane protein insertase YidC (279 aa).

A signal peptide spans methionine 1 to alanine 22. Cysteine 23 carries N-palmitoyl cysteine lipidation. Residue cysteine 23 is the site of S-diacylglycerol cysteine attachment. 5 consecutive transmembrane segments (helical) span residues isoleucine 35–phenylalanine 55, tyrosine 59–isoleucine 79, methionine 129–valine 149, proline 170–methionine 190, and proline 210–valine 230. The segment covering glutamate 253–lysine 268 has biased composition (basic and acidic residues). The interval glutamate 253–lysine 279 is disordered. Residues alanine 269–lysine 279 are compositionally biased toward basic residues.

The protein belongs to the OXA1/ALB3/YidC family. Type 2 subfamily.

The protein resides in the cell membrane. Functionally, required for the insertion and/or proper folding and/or complex formation of integral membrane proteins into the membrane. Involved in integration of membrane proteins that insert both dependently and independently of the Sec translocase complex, as well as at least some lipoproteins. The sequence is that of Membrane protein insertase YidC from Pediococcus pentosaceus (strain ATCC 25745 / CCUG 21536 / LMG 10740 / 183-1w).